Consider the following 525-residue polypeptide: D-arabinono-1,4-lactone oxidase (525 aa).

Residues 20-195 (IYSSRPEWYF…VGATVRVVPA (176 aa)) enclose the FAD-binding PCMH-type domain. Histidine 58 bears the Pros-8alpha-FAD histidine mark.

This sequence belongs to the oxygen-dependent FAD-linked oxidoreductase family. It depends on FAD as a cofactor.

It is found in the mitochondrion membrane. It catalyses the reaction D-arabinono-1,4-lactone + O2 = dehydro-D-arabinono-1,4-lactone + H2O2 + H(+). It participates in cofactor biosynthesis; D-erythroascorbate biosynthesis; dehydro-D-arabinono-1,4-lactone from D-arabinose: step 2/2. This chain is D-arabinono-1,4-lactone oxidase (ALO1), found in Candida glabrata (strain ATCC 2001 / BCRC 20586 / JCM 3761 / NBRC 0622 / NRRL Y-65 / CBS 138) (Yeast).